Here is a 251-residue protein sequence, read N- to C-terminus: Probable transcriptional regulatory protein Arth_2304 (251 aa).

The protein belongs to the TACO1 family.

It is found in the cytoplasm. This chain is Probable transcriptional regulatory protein Arth_2304, found in Arthrobacter sp. (strain FB24).